Here is a 296-residue protein sequence, read N- to C-terminus: Phosphatidylcholine:diacylglycerol cholinephosphotransferase 2 (296 aa).

Transmembrane regions (helical) follow at residues 83-103 (HWIPCLFAAGVMFFTVVEYTF), 136-156 (VLAALNTILVGMQTTYIGCTW), 165-182 (TIAALFMFTCRGILGYST), 198-218 (PVGNVSFFLFYSGHVAGSMIA), and 250-270 (GHYTIDIAVGVGAGILFDSLA). Active-site residues include histidine 211, histidine 251, and aspartate 255.

This sequence belongs to the phosphatidylcholine:diacylglycerol cholinephosphotransferase family.

The protein resides in the membrane. Its function is as follows. Functions as a phosphatidylcholine:diacylglycerol cholinephosphotransferase that catalyzes the transfer of the phosphocholine headgroup from phosphatidylcholine (PC) to diacylglycerol, a major reaction for the transfer of 18:1 into phosphatidylcholine for desaturation and also for the reverse transfer of 18:2 and 18:3 into the triacylglycerols synthesis pathway. In Arabidopsis thaliana (Mouse-ear cress), this protein is Phosphatidylcholine:diacylglycerol cholinephosphotransferase 2.